The primary structure comprises 181 residues: Crossover junction endodeoxyribonuclease RuvC (181 aa).

Catalysis depends on residues Asp-8, Glu-67, and Asp-139. The Mg(2+) site is built by Asp-8, Glu-67, and Asp-139.

The protein belongs to the RuvC family. In terms of assembly, homodimer which binds Holliday junction (HJ) DNA. The HJ becomes 2-fold symmetrical on binding to RuvC with unstacked arms; it has a different conformation from HJ DNA in complex with RuvA. In the full resolvosome a probable DNA-RuvA(4)-RuvB(12)-RuvC(2) complex forms which resolves the HJ. Mg(2+) is required as a cofactor.

It is found in the cytoplasm. It catalyses the reaction Endonucleolytic cleavage at a junction such as a reciprocal single-stranded crossover between two homologous DNA duplexes (Holliday junction).. The RuvA-RuvB-RuvC complex processes Holliday junction (HJ) DNA during genetic recombination and DNA repair. Endonuclease that resolves HJ intermediates. Cleaves cruciform DNA by making single-stranded nicks across the HJ at symmetrical positions within the homologous arms, yielding a 5'-phosphate and a 3'-hydroxyl group; requires a central core of homology in the junction. The consensus cleavage sequence is 5'-(A/T)TT(C/G)-3'. Cleavage occurs on the 3'-side of the TT dinucleotide at the point of strand exchange. HJ branch migration catalyzed by RuvA-RuvB allows RuvC to scan DNA until it finds its consensus sequence, where it cleaves and resolves the cruciform DNA. The protein is Crossover junction endodeoxyribonuclease RuvC of Acinetobacter baylyi (strain ATCC 33305 / BD413 / ADP1).